A 185-amino-acid chain; its full sequence is Lipid A acyltransferase PagP (185 aa).

An N-terminal signal peptide occupies residues Met-1–Gly-14. The N-palmitoyl cysteine moiety is linked to residue Cys-15. Cys-15 is lipidated: S-diacylglycerol cysteine. Residues His-57, Asp-100, and Ser-101 contribute to the active site.

This sequence belongs to the lipid A palmitoyltransferase family. In terms of assembly, homodimer.

The protein resides in the cell outer membrane. It carries out the reaction a lipid A + a 1,2-diacyl-sn-glycero-3-phosphocholine = a hepta-acyl lipid A + a 2-acyl-sn-glycero-3-phosphocholine. The enzyme catalyses a lipid IVA + a 1,2-diacyl-sn-glycero-3-phosphocholine = a lipid IVB + a 2-acyl-sn-glycero-3-phosphocholine. The catalysed reaction is a lipid IIA + a 1,2-diacyl-sn-glycero-3-phosphocholine = a lipid IIB + a 2-acyl-sn-glycero-3-phosphocholine. Functionally, transfers a fatty acid residue from the sn-1 position of a phospholipid to the N-linked hydroxyfatty acid chain on the proximal unit of lipid A or its precursors. The protein is Lipid A acyltransferase PagP of Erwinia sp. (strain Ejp617).